Here is a 333-residue protein sequence, read N- to C-terminus: GDP-fucose transporter 1 (333 aa).

8 consecutive transmembrane segments (helical) span residues 13–33 (SIKI…MVFL), 45–65 (APMF…FILG), 95–115 (LVFV…GVAF), 139–159 (TSMP…VGVN), 169–189 (MAGI…AIYI), 211–231 (AIFL…IAAS), 239–259 (YWFL…VSML), and 293–313 (TATW…YVLV).

It belongs to the TPT transporter family. SLC35C subfamily.

The protein localises to the golgi apparatus membrane. It carries out the reaction GMP(out) + GDP-beta-L-fucose(in) = GMP(in) + GDP-beta-L-fucose(out). Its function is as follows. Antiporter specific for GDP-l-fucose and depending on the concomitant reverse transport of GMP. Involved in GDP-fucose import from the cytoplasm into the Golgi lumen. The protein is GDP-fucose transporter 1 (slc35c1) of Monosiga brevicollis (Choanoflagellate).